A 41-amino-acid chain; its full sequence is Large ribosomal subunit protein bL36 (41 aa).

This sequence belongs to the bacterial ribosomal protein bL36 family.

The sequence is that of Large ribosomal subunit protein bL36 from Rhodopseudomonas palustris (strain BisB5).